Consider the following 272-residue polypeptide: MDNLIKDMRENLNSYSFKVVSDLVKELDVNRDNKAQIKELADLLKEDKRKNVSSLGNRLEKNLNNLIKEEERVKNMYLFDKSFGDYKYVAGVDEVGRGPLAGPIVSAAVILDSSDLDDIILYINDSKKLSEHKREELSEIIKEKALSYSISMCDSKEIDEKGIGYCNNHVFIKACEGLSIKPDLVLSDGYLIKNFNGENKHVIKGDTKSACIACASIIAKVYRDNIMKEYHKKYPQYDFEKNVGYGTKTHVDALKEVGPTEIHRMSFLKNIL.

Residues 87–272 form the RNase H type-2 domain; the sequence is KYVAGVDEVG…HRMSFLKNIL (186 aa). A divalent metal cation-binding residues include aspartate 93, glutamate 94, and aspartate 188.

It belongs to the RNase HII family. It depends on Mn(2+) as a cofactor. Mg(2+) serves as cofactor.

The protein localises to the cytoplasm. The enzyme catalyses Endonucleolytic cleavage to 5'-phosphomonoester.. Its function is as follows. Endonuclease that specifically degrades the RNA of RNA-DNA hybrids. This is Ribonuclease HII from Clostridium perfringens (strain ATCC 13124 / DSM 756 / JCM 1290 / NCIMB 6125 / NCTC 8237 / Type A).